Consider the following 445-residue polypeptide: Ribosomal protein uS12 methylthiotransferase RimO (445 aa).

An MTTase N-terminal domain is found at 4-119 (LKFGLVSLGC…LDDAIEDFFN (116 aa)). Residues cysteine 13, cysteine 48, cysteine 82, cysteine 156, cysteine 160, and cysteine 163 each contribute to the [4Fe-4S] cluster site. A Radical SAM core domain is found at 142–372 (TTGEYSSYVR…MLIQQQVSKN (231 aa)). A TRAM domain is found at 375 to 441 (AKKIGKVYKV…EYDLIGVVYN (67 aa)).

Belongs to the methylthiotransferase family. RimO subfamily. It depends on [4Fe-4S] cluster as a cofactor.

The protein resides in the cytoplasm. The catalysed reaction is L-aspartate(89)-[ribosomal protein uS12]-hydrogen + (sulfur carrier)-SH + AH2 + 2 S-adenosyl-L-methionine = 3-methylsulfanyl-L-aspartate(89)-[ribosomal protein uS12]-hydrogen + (sulfur carrier)-H + 5'-deoxyadenosine + L-methionine + A + S-adenosyl-L-homocysteine + 2 H(+). Its function is as follows. Catalyzes the methylthiolation of an aspartic acid residue of ribosomal protein uS12. The chain is Ribosomal protein uS12 methylthiotransferase RimO from Clostridium acetobutylicum (strain ATCC 824 / DSM 792 / JCM 1419 / IAM 19013 / LMG 5710 / NBRC 13948 / NRRL B-527 / VKM B-1787 / 2291 / W).